We begin with the raw amino-acid sequence, 252 residues long: tRNA (guanine-N(1)-)-methyltransferase (252 aa).

S-adenosyl-L-methionine-binding positions include Gly-117 and 137–142; that span reads IGDYVL.

Belongs to the RNA methyltransferase TrmD family. Homodimer.

The protein resides in the cytoplasm. It catalyses the reaction guanosine(37) in tRNA + S-adenosyl-L-methionine = N(1)-methylguanosine(37) in tRNA + S-adenosyl-L-homocysteine + H(+). Specifically methylates guanosine-37 in various tRNAs. The protein is tRNA (guanine-N(1)-)-methyltransferase of Idiomarina loihiensis (strain ATCC BAA-735 / DSM 15497 / L2-TR).